Consider the following 460-residue polypeptide: GTPase Der (460 aa).

2 consecutive EngA-type G domains span residues 3–167 (FTFA…PEPD) and 189–364 (IRVA…ATWN). Residues 9 to 16 (GRPNVGKS), 56 to 60 (DTAGL), 119 to 122 (NKSE), 195 to 202 (GRPNAGKS), 242 to 246 (DTAGL), and 307 to 310 (NKWD) each bind GTP. One can recognise a KH-like domain in the interval 365-449 (RRVPTAALNR…PVRIMLREKA (85 aa)).

Belongs to the TRAFAC class TrmE-Era-EngA-EngB-Septin-like GTPase superfamily. EngA (Der) GTPase family. Associates with the 50S ribosomal subunit.

Functionally, GTPase that plays an essential role in the late steps of ribosome biogenesis. In Rhodopseudomonas palustris (strain BisA53), this protein is GTPase Der.